Reading from the N-terminus, the 419-residue chain is Enolase (419 aa).

Gln-161 provides a ligand contact to (2R)-2-phosphoglycerate. The active-site Proton donor is Glu-205. Asp-240, Glu-283, and Asp-309 together coordinate Mg(2+). Residues Lys-334, Arg-363, Ser-364, and Lys-385 each coordinate (2R)-2-phosphoglycerate. Residue Lys-334 is the Proton acceptor of the active site.

This sequence belongs to the enolase family. Mg(2+) serves as cofactor.

It is found in the cytoplasm. The protein resides in the secreted. It localises to the cell surface. The catalysed reaction is (2R)-2-phosphoglycerate = phosphoenolpyruvate + H2O. It participates in carbohydrate degradation; glycolysis; pyruvate from D-glyceraldehyde 3-phosphate: step 4/5. In terms of biological role, catalyzes the reversible conversion of 2-phosphoglycerate (2-PG) into phosphoenolpyruvate (PEP). It is essential for the degradation of carbohydrates via glycolysis. The polypeptide is Enolase (Saccharolobus islandicus (strain L.S.2.15 / Lassen #1) (Sulfolobus islandicus)).